Here is a 153-residue protein sequence, read N- to C-terminus: Probable histone H2A.2 (153 aa).

Disordered regions lie at residues 1-24 and 127-153; these read MDAS…KKSV and KKTE…PKKA. The span at 127–141 shows a compositional bias: basic and acidic residues; sequence KKTERSNTVSKEPKS. The segment covering 142–153 has biased composition (basic residues); the sequence is PKPKAGKSPKKA. Residues 149-152 carry the SPKK motif motif; sequence SPKK.

The protein belongs to the histone H2A family. In terms of assembly, the nucleosome is a histone octamer containing two molecules each of H2A, H2B, H3 and H4 assembled in one H3-H4 heterotetramer and two H2A-H2B heterodimers. The octamer wraps approximately 147 bp of DNA.

Its subcellular location is the nucleus. It is found in the chromosome. Functionally, core component of nucleosome. Nucleosomes wrap and compact DNA into chromatin, limiting DNA accessibility to the cellular machineries which require DNA as a template. Histones thereby play a central role in transcription regulation, DNA repair, DNA replication and chromosomal stability. DNA accessibility is regulated via a complex set of post-translational modifications of histones, also called histone code, and nucleosome remodeling. The protein is Probable histone H2A.2 of Medicago truncatula (Barrel medic).